A 456-amino-acid chain; its full sequence is Ammonium transporter Amt2 (456 aa).

11 helical membrane-spanning segments follow: residues 18–38 (LVWVLTVTFLIFFMHAGFAML), 61–81 (IGVIVFFLLGAAVSAIVAGLT), 109–129 (WLFGAVFAMTAATIVSGAVAG), 141–161 (ILIAGVIYPVVVGVTWAGGFL), 170–190 (AGGMIVHGMGGIAGLTAAWII), 211–231 (ITFAVLGTLILAFGWYGFNVG), 255–275 (VALVTTLGMAAGALGAGGVAF), 281–301 (VDTLYVANGVLAGLVGITAIA), 304–324 (IVWPGALVVGLLAGAQLPIVF), 339–359 (VFPVHGSAGVLGTLLYPVFAV), and 377–397 (VGVGVIAVWTFVATTAIFGGF).

This sequence belongs to the ammonia transporter channel (TC 1.A.11.2) family. In terms of assembly, homotrimer. Interacts with both GlnK1 and GlnK2 after ammonium shock.

The protein localises to the cell membrane. Its function is as follows. Involved in the uptake of ammonium/ammonia (NH(4)(+)/NH(3)). Transport is electrogenic. This Haloferax mediterranei (strain ATCC 33500 / DSM 1411 / JCM 8866 / NBRC 14739 / NCIMB 2177 / R-4) (Halobacterium mediterranei) protein is Ammonium transporter Amt2.